A 471-amino-acid chain; its full sequence is GDP-fucose protein O-fucosyltransferase 3 (471 aa).

Topologically, residues 1 to 8 (MNRMWEKK) are cytoplasmic. Residues 9–29 (FWISCFFIILFFILVTLQVMV) form a helical; Signal-anchor for type II membrane protein membrane-spanning segment. Residues 30 to 471 (ELGRFEKRET…EFWNLVFKFQ (442 aa)) are Lumenal-facing. N-linked (GlcNAc...) asparagine glycans are attached at residues Asn102, Asn122, Asn160, and Asn310. A disulfide bridge connects residues Cys381 and Cys384. Asn457 carries an N-linked (GlcNAc...) asparagine glycan.

The protein belongs to the glycosyltransferase 10 family.

The protein localises to the endoplasmic reticulum membrane. It carries out the reaction L-threonyl-[protein] + GDP-beta-L-fucose = 3-O-(alpha-L-fucosyl)-L-threonyl-[protein] + GDP + H(+). The catalysed reaction is L-seryl-[protein] + GDP-beta-L-fucose = 3-O-(alpha-L-fucosyl)-L-seryl-[protein] + GDP + H(+). The protein operates within protein modification; protein glycosylation. Protein O-fucosyltransferase that specifically catalyzes O-fucosylation of serine or threonine residues in EMI domains of target proteins. Attaches fucose through an O-glycosidic linkage. O-fucosylation of EMI domain-containing proteins may be required for facilitating protein folding and secretion. This chain is GDP-fucose protein O-fucosyltransferase 3 (fut10), found in Xenopus tropicalis (Western clawed frog).